A 416-amino-acid polypeptide reads, in one-letter code: Serine hydroxymethyltransferase (416 aa).

(6S)-5,6,7,8-tetrahydrofolate is bound by residues leucine 121 and 125-127 (GHL). An N6-(pyridoxal phosphate)lysine modification is found at lysine 230.

This sequence belongs to the SHMT family. Homodimer. Pyridoxal 5'-phosphate is required as a cofactor.

It is found in the cytoplasm. The catalysed reaction is (6R)-5,10-methylene-5,6,7,8-tetrahydrofolate + glycine + H2O = (6S)-5,6,7,8-tetrahydrofolate + L-serine. It participates in one-carbon metabolism; tetrahydrofolate interconversion. The protein operates within amino-acid biosynthesis; glycine biosynthesis; glycine from L-serine: step 1/1. Catalyzes the reversible interconversion of serine and glycine with tetrahydrofolate (THF) serving as the one-carbon carrier. This reaction serves as the major source of one-carbon groups required for the biosynthesis of purines, thymidylate, methionine, and other important biomolecules. Also exhibits THF-independent aldolase activity toward beta-hydroxyamino acids, producing glycine and aldehydes, via a retro-aldol mechanism. The sequence is that of Serine hydroxymethyltransferase from Nitrosospira multiformis (strain ATCC 25196 / NCIMB 11849 / C 71).